Here is a 531-residue protein sequence, read N- to C-terminus: Purine catabolism regulatory protein (531 aa).

This sequence belongs to the CdaR family.

Functionally, activates the expression of pucFG, pucH, pucI, pucJKLM and guaD, while it represses pucABCDE and its own expression. This Bacillus subtilis (strain 168) protein is Purine catabolism regulatory protein (pucR).